Consider the following 155-residue polypeptide: MAKGEGHILAQNKKARLDYHIVETVEAGIVLTGTEIKSVRAARIQLKDGFAQIKNGEAWLVNVHIAPFEQGNIWNADPERTRKLLLKKREITHLANELKGTGMTLVPLKVYLKDGFAKVLIGLAKGKHDYDKRETIKRRDQERDIKKQMKHYNAR.

It belongs to the SmpB family.

It is found in the cytoplasm. Its function is as follows. Required for rescue of stalled ribosomes mediated by trans-translation. Binds to transfer-messenger RNA (tmRNA), required for stable association of tmRNA with ribosomes. tmRNA and SmpB together mimic tRNA shape, replacing the anticodon stem-loop with SmpB. tmRNA is encoded by the ssrA gene; the 2 termini fold to resemble tRNA(Ala) and it encodes a 'tag peptide', a short internal open reading frame. During trans-translation Ala-aminoacylated tmRNA acts like a tRNA, entering the A-site of stalled ribosomes, displacing the stalled mRNA. The ribosome then switches to translate the ORF on the tmRNA; the nascent peptide is terminated with the 'tag peptide' encoded by the tmRNA and targeted for degradation. The ribosome is freed to recommence translation, which seems to be the essential function of trans-translation. This is SsrA-binding protein from Streptococcus pyogenes serotype M18 (strain MGAS8232).